A 963-amino-acid chain; its full sequence is Bifunctional glutamine synthetase adenylyltransferase/adenylyl-removing enzyme (963 aa).

The segment at 1–453 is adenylyl removase; sequence MLTTLIPLSQ…IFNEIIGEEE (453 aa). An adenylyl transferase region spans residues 461–963; it reads VNEKLAEWKD…VREMWQRLLA (503 aa).

This sequence belongs to the GlnE family. It depends on Mg(2+) as a cofactor.

The catalysed reaction is [glutamine synthetase]-O(4)-(5'-adenylyl)-L-tyrosine + phosphate = [glutamine synthetase]-L-tyrosine + ADP. It carries out the reaction [glutamine synthetase]-L-tyrosine + ATP = [glutamine synthetase]-O(4)-(5'-adenylyl)-L-tyrosine + diphosphate. In terms of biological role, involved in the regulation of glutamine synthetase GlnA, a key enzyme in the process to assimilate ammonia. When cellular nitrogen levels are high, the C-terminal adenylyl transferase (AT) inactivates GlnA by covalent transfer of an adenylyl group from ATP to specific tyrosine residue of GlnA, thus reducing its activity. Conversely, when nitrogen levels are low, the N-terminal adenylyl removase (AR) activates GlnA by removing the adenylyl group by phosphorolysis, increasing its activity. The regulatory region of GlnE binds the signal transduction protein PII (GlnB) which indicates the nitrogen status of the cell. This Mannheimia haemolytica (Pasteurella haemolytica) protein is Bifunctional glutamine synthetase adenylyltransferase/adenylyl-removing enzyme.